Here is a 200-residue protein sequence, read N- to C-terminus: Tegument protein UL55 homolog (200 aa).

The segment covering 1 to 20 (MLPANRAEHSSDAEPRDIGS) has biased composition (basic and acidic residues). The segment at 1-23 (MLPANRAEHSSDAEPRDIGSHGR) is disordered.

Belongs to the alphaherpesvirinae HHV-1 UL55 family.

The protein resides in the virion tegument. It localises to the host nucleus matrix. This Equine herpesvirus 1 (strain Ab4p) (EHV-1) protein is Tegument protein UL55 homolog.